A 126-amino-acid chain; its full sequence is Histone H2B type 1-K (126 aa).

The segment covering 1-12 (MPEPAKSAPAPK) has biased composition (low complexity). Residues 1-36 (MPEPAKSAPAPKKGSKKAVTKAQKKDGKKRKRSRKE) are disordered. Pro-2 is subject to N-acetylproline. Glu-3 is modified (ADP-ribosyl glutamic acid). Lys-6 carries the post-translational modification N6-(2-hydroxyisobutyryl)lysine; alternate. Lys-6 bears the N6-(beta-hydroxybutyryl)lysine; alternate mark. Position 6 is an N6-acetyllysine; alternate (Lys-6). Lys-6 bears the N6-butyryllysine; alternate mark. Lys-6 carries the post-translational modification N6-crotonyllysine; alternate. N6-lactoyllysine; alternate is present on Lys-6. A Glycyl lysine isopeptide (Lys-Gly) (interchain with G-Cter in SUMO2); alternate cross-link involves residue Lys-6. Ser-7 carries the post-translational modification ADP-ribosylserine. Lys-12 bears the N6-(beta-hydroxybutyryl)lysine; alternate mark. Residues Lys-12 and Lys-13 each carry the N6-acetyllysine; alternate modification. N6-crotonyllysine; alternate occurs at positions 12 and 13. Lys-12 is subject to N6-lactoyllysine; alternate. Lys-13 carries the post-translational modification N6-(2-hydroxyisobutyryl)lysine; alternate. Ser-15 is modified (phosphoserine; by STK4/MST1). Lys-16, Lys-17, Lys-21, and Lys-24 each carry N6-acetyllysine; alternate. N6-crotonyllysine; alternate is present on residues Lys-16, Lys-17, Lys-21, and Lys-24. Residues Lys-16, Lys-17, Lys-21, and Lys-24 each carry the N6-lactoyllysine; alternate modification. Position 17 is an N6-glutaryllysine; alternate (Lys-17). An N6-(2-hydroxyisobutyryl)lysine; alternate mark is found at Lys-21 and Lys-24. Residue Lys-21 is modified to N6-(beta-hydroxybutyryl)lysine; alternate. Position 21 is an N6-butyryllysine; alternate (Lys-21). A Glycyl lysine isopeptide (Lys-Gly) (interchain with G-Cter in SUMO2); alternate cross-link involves residue Lys-21. Residue Lys-25 is modified to N6-(2-hydroxyisobutyryl)lysine. N6-(2-hydroxyisobutyryl)lysine; alternate is present on Lys-35. Lys-35 bears the N6-(beta-hydroxybutyryl)lysine; alternate mark. The residue at position 35 (Lys-35) is an N6-crotonyllysine; alternate. At Lys-35 the chain carries N6-glutaryllysine; alternate. Lys-35 carries the N6-succinyllysine; alternate modification. A Glycyl lysine isopeptide (Lys-Gly) (interchain with G-Cter in ubiquitin); alternate cross-link involves residue Lys-35. Glu-36 carries the post-translational modification PolyADP-ribosyl glutamic acid. At Ser-37 the chain carries Phosphoserine; by AMPK. Residues Lys-44, Lys-47, and Lys-58 each carry the N6-(2-hydroxyisobutyryl)lysine; alternate modification. Residue Lys-44 is modified to N6-lactoyllysine; alternate. N6-glutaryllysine; alternate is present on residues Lys-44 and Lys-47. Lys-47 is modified (N6-methyllysine; alternate). Lys-58 carries the post-translational modification N6,N6-dimethyllysine; alternate. Arg-80 is subject to Dimethylated arginine. Position 86 is an N6-(2-hydroxyisobutyryl)lysine; alternate (Lys-86). Lys-86 carries the post-translational modification N6-acetyllysine; alternate. Lys-86 carries the N6-lactoyllysine; alternate modification. Residue Lys-86 is modified to N6,N6,N6-trimethyllysine; alternate. Arg-87 and Arg-93 each carry omega-N-methylarginine. Lys-109 carries the post-translational modification N6-(2-hydroxyisobutyryl)lysine; alternate. Lys-109 carries the N6-(beta-hydroxybutyryl)lysine; alternate modification. Lys-109 bears the N6-lactoyllysine; alternate mark. Lys-109 carries the N6-glutaryllysine; alternate modification. At Lys-109 the chain carries N6-methyllysine; alternate. The O-linked (GlcNAc) serine glycan is linked to Ser-113. Thr-116 carries the post-translational modification Phosphothreonine. An N6-(2-hydroxyisobutyryl)lysine; alternate mark is found at Lys-117 and Lys-121. N6-(beta-hydroxybutyryl)lysine; alternate is present on Lys-117. 2 positions are modified to N6-lactoyllysine; alternate: Lys-117 and Lys-121. N6-glutaryllysine; alternate occurs at positions 117 and 121. N6-succinyllysine; alternate is present on residues Lys-117 and Lys-121. At Lys-117 the chain carries N6-methylated lysine; alternate. Residue Lys-121 forms a Glycyl lysine isopeptide (Lys-Gly) (interchain with G-Cter in ubiquitin); alternate linkage.

The protein belongs to the histone H2B family. The nucleosome is a histone octamer containing two molecules each of H2A, H2B, H3 and H4 assembled in one H3-H4 heterotetramer and two H2A-H2B heterodimers. The octamer wraps approximately 147 bp of DNA. Monoubiquitination at Lys-35 (H2BK34Ub) by the MSL1/MSL2 dimer is required for histone H3 'Lys-4' (H3K4me) and 'Lys-79' (H3K79me) methylation and transcription activation at specific gene loci, such as HOXA9 and MEIS1 loci. Similarly, monoubiquitination at Lys-121 (H2BK120Ub) by the RNF20/40 complex gives a specific tag for epigenetic transcriptional activation and is also prerequisite for histone H3 'Lys-4' and 'Lys-79' methylation. It also functions cooperatively with the FACT dimer to stimulate elongation by RNA polymerase II. H2BK120Ub also acts as a regulator of mRNA splicing: deubiquitination by USP49 is required for efficient cotranscriptional splicing of a large set of exons. Post-translationally, phosphorylated on Ser-15 (H2BS14ph) by STK4/MST1 during apoptosis; which facilitates apoptotic chromatin condensation. Also phosphorylated on Ser-15 in response to DNA double strand breaks (DSBs), and in correlation with somatic hypermutation and immunoglobulin class-switch recombination. Phosphorylation at Ser-37 (H2BS36ph) by AMPK in response to stress promotes transcription. In terms of processing, glcNAcylation at Ser-113 promotes monoubiquitination of Lys-121. It fluctuates in response to extracellular glucose, and associates with transcribed genes. ADP-ribosylated by PARP1 or PARP2 on Ser-7 (H2BS6ADPr) in response to DNA damage. H2BS6ADPr promotes recruitment of CHD1L. Mono-ADP-ribosylated on Glu-3 (H2BE2ADPr) by PARP3 in response to single-strand breaks. Poly ADP-ribosylation on Glu-36 (H2BE35ADPr) by PARP1 regulates adipogenesis: it inhibits phosphorylation at Ser-37 (H2BS36ph), thereby blocking expression of pro-adipogenetic genes. Post-translationally, crotonylation (Kcr) is specifically present in male germ cells and marks testis-specific genes in post-meiotic cells, including X-linked genes that escape sex chromosome inactivation in haploid cells. Crotonylation marks active promoters and enhancers and confers resistance to transcriptional repressors. It is also associated with post-meiotically activated genes on autosomes. In terms of processing, hydroxybutyrylation of histones is induced by starvation. Lactylated in macrophages by EP300/P300 by using lactoyl-CoA directly derived from endogenous or exogenous lactate, leading to stimulates gene transcription.

Its subcellular location is the nucleus. The protein resides in the chromosome. Core component of nucleosome. Nucleosomes wrap and compact DNA into chromatin, limiting DNA accessibility to the cellular machineries which require DNA as a template. Histones thereby play a central role in transcription regulation, DNA repair, DNA replication and chromosomal stability. DNA accessibility is regulated via a complex set of post-translational modifications of histones, also called histone code, and nucleosome remodeling. The sequence is that of Histone H2B type 1-K from Mus musculus (Mouse).